The sequence spans 155 residues: Aspartate carbamoyltransferase regulatory chain (155 aa).

Residues C112, C117, C140, and C143 each contribute to the Zn(2+) site.

This sequence belongs to the PyrI family. In terms of assembly, contains catalytic and regulatory chains. Requires Zn(2+) as cofactor.

In terms of biological role, involved in allosteric regulation of aspartate carbamoyltransferase. This Phocaeicola vulgatus (strain ATCC 8482 / DSM 1447 / JCM 5826 / CCUG 4940 / NBRC 14291 / NCTC 11154) (Bacteroides vulgatus) protein is Aspartate carbamoyltransferase regulatory chain.